Consider the following 393-residue polypeptide: Protein TsgA (393 aa).

Helical transmembrane passes span 11-31, 51-71, 78-98, 101-121, 134-154, 162-182, 206-226, 245-265, 273-293, 298-318, 332-352, and 361-381; these read WISF…GMVM, FLNA…EIVP, FGFI…SLAL, AAMF…TFLI, LLFT…VAAF, WYWV…LTFG, IGVL…LGFI, ALVS…SFIL, ILTV…TGTQ, WFIL…ITLG, FILT…GPIV, and LLTA…LGFV.

This sequence belongs to the major facilitator superfamily. TsgA family.

It localises to the cell inner membrane. The protein is Protein TsgA of Salmonella gallinarum (strain 287/91 / NCTC 13346).